We begin with the raw amino-acid sequence, 262 residues long: uncharacterized protein (262 aa).

Disordered stretches follow at residues 1–30 and 232–262; these read MGKK…KKEK and EEEE…DMEE. Composition is skewed to acidic residues over residues 9 to 21, 232 to 245, and 253 to 262; these read NEDG…ETES, EEEE…EETD, and EEDEDEDMEE.

This is an uncharacterized protein from Caenorhabditis elegans.